The following is a 363-amino-acid chain: Anthranilate phosphoribosyltransferase (363 aa).

5-phospho-alpha-D-ribose 1-diphosphate contacts are provided by residues G85, 88-89 (GD), T93, 95-98 (NVST), 113-121 (KHGNRALSS), and A125. Anthranilate is bound at residue G85. Position 97 (S97) interacts with Mg(2+). N116 lines the anthranilate pocket. R171 serves as a coordination point for anthranilate. The Mg(2+) site is built by D233 and E234.

It belongs to the anthranilate phosphoribosyltransferase family. As to quaternary structure, homodimer. Requires Mg(2+) as cofactor.

The catalysed reaction is N-(5-phospho-beta-D-ribosyl)anthranilate + diphosphate = 5-phospho-alpha-D-ribose 1-diphosphate + anthranilate. It functions in the pathway amino-acid biosynthesis; L-tryptophan biosynthesis; L-tryptophan from chorismate: step 2/5. Catalyzes the transfer of the phosphoribosyl group of 5-phosphorylribose-1-pyrophosphate (PRPP) to anthranilate to yield N-(5'-phosphoribosyl)-anthranilate (PRA). The sequence is that of Anthranilate phosphoribosyltransferase from Gluconobacter oxydans (strain 621H) (Gluconobacter suboxydans).